We begin with the raw amino-acid sequence, 293 residues long: Microtubule-associated protein RP/EB family member 1B (293 aa).

The 103-residue stretch at 13 to 115 (FVGRNEILSW…FLQWLKRFCD (103 aa)) folds into the Calponin-homology (CH) domain. Disordered stretches follow at residues 124 to 188 (ENYN…SAEV) and 262 to 293 (LGLEGYEEEGKEEEEEEEEEEEEAAAAAETQT). Residues 129–141 (VERRSRGGREKSV) show a composition bias toward basic and acidic residues. Over residues 151-166 (LQTNNMHHPPVATSNK) the composition is skewed to polar residues. Positions 180–250 (GGSNSSAEVQ…LYATDANESV (71 aa)) constitute an EB1 C-terminal domain. Residues 266 to 285 (GYEEEGKEEEEEEEEEEEEA) are compositionally biased toward acidic residues.

Belongs to the MAPRE family. As to quaternary structure, homodimer and heterodimer with EB1A. As to expression, highly expressed in guard cells of leaf stomata, pollen grains and pollen tubes. Expressed in young roots.

Its subcellular location is the cytoplasm. The protein localises to the cytoskeleton. It localises to the spindle pole. It is found in the phragmoplast. Binds to the plus end of microtubules and regulates the dynamics of the microtubule cytoskeleton. May be involved in anchoring microtubules to their nucleation sites and/or functioning as a reservoir for distribution to the growing end. In plants, microtubule minus ends are not necessarily severed from the nucleation site and transported to the plus end of a microtubule as part of the recycling process. May play a role in endomembrane organization during polarized growth of plant cells. The sequence is that of Microtubule-associated protein RP/EB family member 1B (EB1B) from Arabidopsis thaliana (Mouse-ear cress).